The chain runs to 124 residues: Small ribosomal subunit protein uS13 (124 aa).

The disordered stretch occupies residues 95-124 (GLPVRGQRTKTNARTRKGPKRTIAGKKKAR).

Belongs to the universal ribosomal protein uS13 family. As to quaternary structure, part of the 30S ribosomal subunit. Forms a loose heterodimer with protein S19. Forms two bridges to the 50S subunit in the 70S ribosome.

Its function is as follows. Located at the top of the head of the 30S subunit, it contacts several helices of the 16S rRNA. In the 70S ribosome it contacts the 23S rRNA (bridge B1a) and protein L5 of the 50S subunit (bridge B1b), connecting the 2 subunits; these bridges are implicated in subunit movement. Contacts the tRNAs in the A and P-sites. The sequence is that of Small ribosomal subunit protein uS13 from Mycobacteroides abscessus (strain ATCC 19977 / DSM 44196 / CCUG 20993 / CIP 104536 / JCM 13569 / NCTC 13031 / TMC 1543 / L948) (Mycobacterium abscessus).